Consider the following 86-residue polypeptide: Probable oxaloacetate decarboxylase gamma chain 1 (86 aa).

Residues 11 to 33 traverse the membrane as a helical segment; sequence AATLMVTGMAVVFLFLTLLVYLV.

The protein belongs to the OadG family. Heterotrimer of an alpha, a beta and a gamma subunit. The cofactor is Na(+).

Its subcellular location is the cell membrane. The enzyme catalyses oxaloacetate + 2 Na(+)(in) + H(+) = pyruvate + 2 Na(+)(out) + CO2. Catalyzes the decarboxylation of oxaloacetate coupled to Na(+) translocation. This chain is Probable oxaloacetate decarboxylase gamma chain 1 (oadG1), found in Vibrio cholerae serotype O1 (strain ATCC 39315 / El Tor Inaba N16961).